The following is a 305-amino-acid chain: Dihydroorotate dehydrogenase B (NAD(+)), catalytic subunit (305 aa).

FMN contacts are provided by residues Ser21 and 45–46; that span reads KG. Substrate is bound by residues Lys45 and 69–73; that span reads NAVGL. FMN-binding residues include Asn99 and Asn127. A substrate-binding site is contributed by Asn127. Cys130 acts as the Nucleophile in catalysis. Residues Lys165 and Ile191 each contribute to the FMN site. Position 192–193 (192–193) interacts with substrate; it reads NT. Residues Gly217, 243–244, and 265–266 each bind FMN; these read GG and GT.

Belongs to the dihydroorotate dehydrogenase family. Type 1 subfamily. In terms of assembly, heterotetramer of 2 PyrK and 2 PyrD type B subunits. FMN is required as a cofactor.

It localises to the cytoplasm. It catalyses the reaction (S)-dihydroorotate + NAD(+) = orotate + NADH + H(+). It functions in the pathway pyrimidine metabolism; UMP biosynthesis via de novo pathway; orotate from (S)-dihydroorotate (NAD(+) route): step 1/1. Functionally, catalyzes the conversion of dihydroorotate to orotate with NAD(+) as electron acceptor. In Parabacteroides distasonis (strain ATCC 8503 / DSM 20701 / CIP 104284 / JCM 5825 / NCTC 11152), this protein is Dihydroorotate dehydrogenase B (NAD(+)), catalytic subunit (pyrD).